A 199-amino-acid polypeptide reads, in one-letter code: Superoxide dismutase [Mn/Fe] (199 aa).

Fe(3+) contacts are provided by His27, His81, Asp161, and His165. The Mn(2+) site is built by His27, His81, Asp161, and His165.

Belongs to the iron/manganese superoxide dismutase family. Homodimer. The cofactor is Mn(2+). Fe(3+) is required as a cofactor.

The enzyme catalyses 2 superoxide + 2 H(+) = H2O2 + O2. In terms of biological role, destroys superoxide anion radicals which are normally produced within the cells and which are toxic to biological systems. Catalyzes the dismutation of superoxide anion radicals into O2 and H2O2 by successive reduction and oxidation of the transition metal ion at the active site. This is Superoxide dismutase [Mn/Fe] (sodA) from Staphylococcus haemolyticus (strain JCSC1435).